Here is a 291-residue protein sequence, read N- to C-terminus: Pyridoxal 5'-phosphate synthase subunit PdxS (291 aa).

Residue aspartate 23 participates in D-ribose 5-phosphate binding. Lysine 80 serves as the catalytic Schiff-base intermediate with D-ribose 5-phosphate. A D-ribose 5-phosphate-binding site is contributed by glycine 152. Arginine 164 lines the D-glyceraldehyde 3-phosphate pocket. D-ribose 5-phosphate-binding positions include glycine 213 and 234–235; that span reads GS.

It belongs to the PdxS/SNZ family. In terms of assembly, in the presence of PdxT, forms a dodecamer of heterodimers.

It catalyses the reaction aldehydo-D-ribose 5-phosphate + D-glyceraldehyde 3-phosphate + L-glutamine = pyridoxal 5'-phosphate + L-glutamate + phosphate + 3 H2O + H(+). It functions in the pathway cofactor biosynthesis; pyridoxal 5'-phosphate biosynthesis. Catalyzes the formation of pyridoxal 5'-phosphate from ribose 5-phosphate (RBP), glyceraldehyde 3-phosphate (G3P) and ammonia. The ammonia is provided by the PdxT subunit. Can also use ribulose 5-phosphate and dihydroxyacetone phosphate as substrates, resulting from enzyme-catalyzed isomerization of RBP and G3P, respectively. In Haemophilus influenzae (strain ATCC 51907 / DSM 11121 / KW20 / Rd), this protein is Pyridoxal 5'-phosphate synthase subunit PdxS.